A 128-amino-acid polypeptide reads, in one-letter code: Ribosome-binding factor A (128 aa).

The protein belongs to the RbfA family. In terms of assembly, monomer. Binds 30S ribosomal subunits, but not 50S ribosomal subunits or 70S ribosomes.

The protein localises to the cytoplasm. In terms of biological role, one of several proteins that assist in the late maturation steps of the functional core of the 30S ribosomal subunit. Associates with free 30S ribosomal subunits (but not with 30S subunits that are part of 70S ribosomes or polysomes). Required for efficient processing of 16S rRNA. May interact with the 5'-terminal helix region of 16S rRNA. In Microcystis aeruginosa (strain NIES-843 / IAM M-2473), this protein is Ribosome-binding factor A.